We begin with the raw amino-acid sequence, 343 residues long: Holliday junction branch migration complex subunit RuvB (343 aa).

A disordered region spans residues methionine 1–glutamine 20. The interval methionine 1–tyrosine 185 is large ATPase domain (RuvB-L). ATP-binding positions include leucine 24, arginine 25, glycine 66, lysine 69, threonine 70, threonine 71, glutamate 132–phenylalanine 134, arginine 175, tyrosine 185, and arginine 222. Position 70 (threonine 70) interacts with Mg(2+). The tract at residues glutamate 186–glutamate 256 is small ATPAse domain (RuvB-S). The tract at residues arginine 259 to leucine 343 is head domain (RuvB-H). DNA is bound by residues arginine 295, arginine 314, and arginine 319.

Belongs to the RuvB family. Homohexamer. Forms an RuvA(8)-RuvB(12)-Holliday junction (HJ) complex. HJ DNA is sandwiched between 2 RuvA tetramers; dsDNA enters through RuvA and exits via RuvB. An RuvB hexamer assembles on each DNA strand where it exits the tetramer. Each RuvB hexamer is contacted by two RuvA subunits (via domain III) on 2 adjacent RuvB subunits; this complex drives branch migration. In the full resolvosome a probable DNA-RuvA(4)-RuvB(12)-RuvC(2) complex forms which resolves the HJ.

Its subcellular location is the cytoplasm. The enzyme catalyses ATP + H2O = ADP + phosphate + H(+). Functionally, the RuvA-RuvB-RuvC complex processes Holliday junction (HJ) DNA during genetic recombination and DNA repair, while the RuvA-RuvB complex plays an important role in the rescue of blocked DNA replication forks via replication fork reversal (RFR). RuvA specifically binds to HJ cruciform DNA, conferring on it an open structure. The RuvB hexamer acts as an ATP-dependent pump, pulling dsDNA into and through the RuvAB complex. RuvB forms 2 homohexamers on either side of HJ DNA bound by 1 or 2 RuvA tetramers; 4 subunits per hexamer contact DNA at a time. Coordinated motions by a converter formed by DNA-disengaged RuvB subunits stimulates ATP hydrolysis and nucleotide exchange. Immobilization of the converter enables RuvB to convert the ATP-contained energy into a lever motion, pulling 2 nucleotides of DNA out of the RuvA tetramer per ATP hydrolyzed, thus driving DNA branch migration. The RuvB motors rotate together with the DNA substrate, which together with the progressing nucleotide cycle form the mechanistic basis for DNA recombination by continuous HJ branch migration. Branch migration allows RuvC to scan DNA until it finds its consensus sequence, where it cleaves and resolves cruciform DNA. The polypeptide is Holliday junction branch migration complex subunit RuvB (Magnetococcus marinus (strain ATCC BAA-1437 / JCM 17883 / MC-1)).